We begin with the raw amino-acid sequence, 205 residues long: MIQAGVVAVQGDVSEHAAAIRRAGESHSISVEIVEIRQSGVVPDCDVLLIPGGESTAISRLLDREGIDTEIQAHVEAGKPVLATCAGLIIAARDAKDDRVETLDIIDVTVDRNAFGRQIDSFEAPLDVDGLDEPFPAVFIRAPVIDAAGEDATVLAQWEDNPVAVQDGAVVATAFHPELTPDSRIHDLAFFANQNNNVDTAVSTD.

Residue 53–55 (GES) coordinates L-glutamine. Cysteine 85 acts as the Nucleophile in catalysis. Residues arginine 112 and 140–141 (IR) each bind L-glutamine. Residues histidine 176 and glutamate 178 each act as charge relay system in the active site.

It belongs to the glutaminase PdxT/SNO family. In the presence of PdxS, forms a dodecamer of heterodimers. Only shows activity in the heterodimer.

The enzyme catalyses aldehydo-D-ribose 5-phosphate + D-glyceraldehyde 3-phosphate + L-glutamine = pyridoxal 5'-phosphate + L-glutamate + phosphate + 3 H2O + H(+). It catalyses the reaction L-glutamine + H2O = L-glutamate + NH4(+). It functions in the pathway cofactor biosynthesis; pyridoxal 5'-phosphate biosynthesis. Functionally, catalyzes the hydrolysis of glutamine to glutamate and ammonia as part of the biosynthesis of pyridoxal 5'-phosphate. The resulting ammonia molecule is channeled to the active site of PdxS. In Haloquadratum walsbyi (strain DSM 16790 / HBSQ001), this protein is Pyridoxal 5'-phosphate synthase subunit PdxT.